Here is a 342-residue protein sequence, read N- to C-terminus: Heat-inducible transcription repressor HrcA (342 aa).

This sequence belongs to the HrcA family.

Functionally, negative regulator of class I heat shock genes (grpE-dnaK-dnaJ and groELS operons). Prevents heat-shock induction of these operons. In Oceanobacillus iheyensis (strain DSM 14371 / CIP 107618 / JCM 11309 / KCTC 3954 / HTE831), this protein is Heat-inducible transcription repressor HrcA.